We begin with the raw amino-acid sequence, 83 residues long: Small ribosomal subunit protein bS16 (83 aa).

It belongs to the bacterial ribosomal protein bS16 family.

This Pseudomonas putida (strain W619) protein is Small ribosomal subunit protein bS16.